A 428-amino-acid polypeptide reads, in one-letter code: Histidinol dehydrogenase (428 aa).

Residues Ser232, Gln254, and His257 each contribute to the substrate site. The Zn(2+) site is built by Gln254 and His257. Catalysis depends on proton acceptor residues Glu324 and His325. The substrate site is built by His325, Asp358, Glu412, and His417. Zn(2+) is bound at residue Asp358. His417 contributes to the Zn(2+) binding site.

This sequence belongs to the histidinol dehydrogenase family. The cofactor is Zn(2+).

It catalyses the reaction L-histidinol + 2 NAD(+) + H2O = L-histidine + 2 NADH + 3 H(+). Its pathway is amino-acid biosynthesis; L-histidine biosynthesis; L-histidine from 5-phospho-alpha-D-ribose 1-diphosphate: step 9/9. In terms of biological role, catalyzes the sequential NAD-dependent oxidations of L-histidinol to L-histidinaldehyde and then to L-histidine. The protein is Histidinol dehydrogenase of Thermotoga maritima (strain ATCC 43589 / DSM 3109 / JCM 10099 / NBRC 100826 / MSB8).